The sequence spans 238 residues: uncharacterized protein (238 aa).

The next 4 helical transmembrane spans lie at 16–36 (HLII…IGLE), 44–64 (VGVK…IVSI), 81–101 (PMRL…GVIL), and 123–143 (IGIA…VMIL).

It belongs to the MgtC/SapB family.

Its subcellular location is the cell inner membrane. This is an uncharacterized protein from Haemophilus influenzae (strain ATCC 51907 / DSM 11121 / KW20 / Rd).